The primary structure comprises 410 residues: Transforming growth factor beta-3 proprotein (410 aa).

The signal sequence occupies residues 1 to 23 (MHLQRALVVLALLNLATISLSLS). 3 N-linked (GlcNAc...) asparagine glycosylation sites follow: Asn72, Asn133, and Asn140. The short motif at 259–261 (RGD) is the Cell attachment site element. The residue at position 291 (Gln291) is an N5-methylglutamine. Disulfide bonds link Cys305–Cys314, Cys313–Cys376, Cys342–Cys407, and Cys346–Cys409.

The protein belongs to the TGF-beta family. As to quaternary structure, interacts with ASPN. Latency-associated peptide: Homodimer; disulfide-linked. Latency-associated peptide: Interacts with Transforming growth factor beta-3 (TGF-beta-3) chain; interaction is non-covalent and maintains (TGF-beta-3) in a latent state. Latency-associated peptide: Interacts with LRRC32/GARP; leading to regulate activation of TGF-beta-3 and promote epithelial fusion during palate development. Latency-associated peptide: Interacts (via cell attachment site) with integrins, leading to release of the active TGF-beta-3. Transforming growth factor beta-3: Homodimer; disulfide-linked. Transforming growth factor beta-3: Interacts with TGF-beta receptors (TGFBR1 and TGFBR2), leading to signal transduction. Post-translationally, transforming growth factor beta-3 proprotein: The precursor proprotein is cleaved in the Golgi apparatus to form Transforming growth factor beta-3 (TGF-beta-3) and Latency-associated peptide (LAP) chains, which remain non-covalently linked, rendering TGF-beta-3 inactive. Methylated at Gln-291 by N6AMT1. In terms of tissue distribution, expressed in mammary glands with a slight increase in expression prior to lactation and again increasing at the onset of involution, expression peaks at day 3 of involution.

Its subcellular location is the secreted. It is found in the extracellular space. The protein localises to the extracellular matrix. Its function is as follows. Transforming growth factor beta-3 proprotein: Precursor of the Latency-associated peptide (LAP) and Transforming growth factor beta-3 (TGF-beta-3) chains, which constitute the regulatory and active subunit of TGF-beta-3, respectively. In terms of biological role, required to maintain the Transforming growth factor beta-3 (TGF-beta-3) chain in a latent state during storage in extracellular matrix. Associates non-covalently with TGF-beta-3 and regulates its activation via interaction with 'milieu molecules', such as LTBP1 and LRRC32/GARP, that control activation of TGF-beta-3. Interaction with integrins results in distortion of the Latency-associated peptide chain and subsequent release of the active TGF-beta-3. Functionally, transforming growth factor beta-3: Multifunctional protein that regulates embryogenesis and cell differentiation and is required in various processes such as secondary palate development. Activation into mature form follows different steps: following cleavage of the proprotein in the Golgi apparatus, Latency-associated peptide (LAP) and Transforming growth factor beta-3 (TGF-beta-3) chains remain non-covalently linked rendering TGF-beta-3 inactive during storage in extracellular matrix. At the same time, LAP chain interacts with 'milieu molecules', such as LTBP1 and LRRC32/GARP that control activation of TGF-beta-3 and maintain it in a latent state during storage in extracellular milieus. TGF-beta-3 is released from LAP by integrins: integrin-binding results in distortion of the LAP chain and subsequent release of the active TGF-beta-3. Once activated following release of LAP, TGF-beta-3 acts by binding to TGF-beta receptors (TGFBR1 and TGFBR2), which transduce signal. This chain is Transforming growth factor beta-3 proprotein, found in Mus musculus (Mouse).